The sequence spans 1016 residues: MASTEQWGAFLHQCLAHRIDVADFKNLSRLLFKRNPIAQGALIDVVLETRLAAGIKWDPLLPLYIDGLCKMGKLQISTVLAALLKHSSIHEKPGTDAAAAKQKQKCYTLMTDIRVIQDAMLAVSTGHAPKSLSETAGTFLAIADWIHAVVSWHHGQMNASQQAEGLMSSPDAVSLFESLGILLAAVSGTEKGLQVLSSDSNEGLKVKLGHALSAYLPLCVDLSLPLRNRLDALQKEFNLYGEPPPKNLGVSSLENLHVNGIQFEASIIDGPAINSRAGLYVYINAMLAGRPLVDDSMLLNYLTNRYGAHYDVLIQDLITAAFDVCSNAMYRNESSRTMFLFRSFLVNKLPSFFAAMLSASMVSIPMELCISHALSRLDPNTFPSFSQMFSMQGNTVLSDVRQEFLFACASHKLIPESSIERLLGENPMQALPVGYNKDDLVSQINTTPERAEQLINEIEFTEGNAGPIVGAITEVMQNLCNQKETMTLKNICNSLSRRPQALDVILLFRSPKQVLQPLCALLDSWHWDEDQGESQPVYDEFGSILLLVLVFKYRYDLSAYDLGIANNDSFVLRLLERGSSSQKLDELSESQNKHLGSWIGALFIAEGISEETMSACSPQEFYLLASTLFSQSLAACEAGKLEFETLKGGFEYLLEPFLLPSLVVALTWLGNHIWEAESDPSIPLKALHSLVSPSSISGEAKEIHRTVLNITARSLDEQLKDVRARHPSRTDIKPILDVLEPCLSFPRTGSCHRSELETWTTHAGNLLGSIRSTMQSLVLWCTSPDVNIPPPSYTHRQLVAGIRIVGATRLLAALLDELRLQTDANNGDLALDIAASLVCAPLPESFAVESSPYHPVAVDLAKDPVPRCPLLTLRDALALQHEAVPRTAEKDPARAEAVVRLYRRVAALAAPTAQVPNLDMNNLIQNMQLGVGVDGHDQMGLPAGGAGDAVGDEPNLDQMLDNAAAAAAAGIDSGVGQGMGGDMSGGLDTSIDDVLNAADMAVGNPEFLDLDMEGMF.

Belongs to the Mediator complex subunit 5 family. Component of the Mediator complex.

Its subcellular location is the nucleus. In terms of biological role, component of the Mediator complex, a coactivator involved in the regulated transcription of nearly all RNA polymerase II-dependent genes. Mediator functions as a bridge to convey information from gene-specific regulatory proteins to the basal RNA polymerase II transcription machinery. Mediator is recruited to promoters by direct interactions with regulatory proteins and serves as a scaffold for the assembly of a functional preinitiation complex with RNA polymerase II and the general transcription factors. This is Mediator of RNA polymerase II transcription subunit 5 (nut1) from Aspergillus terreus (strain NIH 2624 / FGSC A1156).